We begin with the raw amino-acid sequence, 453 residues long: Tubulin delta chain (453 aa).

A143–G149 contributes to the GTP binding site.

Belongs to the tubulin family. In terms of assembly, found in a complex with TEDC1, TEDC2, TUBE1 and TUBD1.

The protein resides in the nucleus. It localises to the cytoplasm. It is found in the cytoskeleton. Its subcellular location is the microtubule organizing center. The protein localises to the centrosome. The protein resides in the centriole. It localises to the cell projection. It is found in the cilium. In terms of biological role, acts as a positive regulator of hedgehog signaling and regulates ciliary function. The polypeptide is Tubulin delta chain (TUBD1) (Macaca fascicularis (Crab-eating macaque)).